Here is a 328-residue protein sequence, read N- to C-terminus: tRNA uridine(34) hydroxylase (328 aa).

The Rhodanese domain occupies 130-224 (LDEDTVVLDT…YGKDPEVQGE (95 aa)). The active-site Cysteine persulfide intermediate is cysteine 184.

It belongs to the TrhO family.

The catalysed reaction is uridine(34) in tRNA + AH2 + O2 = 5-hydroxyuridine(34) in tRNA + A + H2O. Its function is as follows. Catalyzes oxygen-dependent 5-hydroxyuridine (ho5U) modification at position 34 in tRNAs. This Streptococcus pyogenes serotype M49 (strain NZ131) protein is tRNA uridine(34) hydroxylase.